We begin with the raw amino-acid sequence, 272 residues long: MKHIIFTDLDGTLIDHDTYSYDAARPALDLLKEKEIPLIFCTSKTRAELEVYVDELECHHPFISENGGAIFIPKDHFSIELKDVHEIGNYKVIEFGTSYTRIRGVLEDIRKKTGFKITGFGDLDAEGVSKDTGLDIRSAKLAKLREYDEAFRLEEDENATAKVIELIHAAGLNYTKGGRYWHIMGDNDKGKAVRALTEIYRQQFTEVVTIALGDSLNDLPMLKAVDIPFLVQKPDGKYDPSIILTEIKHAEGIGPVGWNNAIMDLIGKNNNI.

Aspartate 8 functions as the Nucleophile in the catalytic mechanism. Mg(2+)-binding residues include aspartate 8, aspartate 10, and aspartate 214.

This sequence belongs to the HAD-like hydrolase superfamily. MPGP family. In terms of assembly, monomer. The cofactor is Co(2+). Mg(2+) is required as a cofactor. Ni(2+) serves as cofactor.

It catalyses the reaction (2R)-2-O-(alpha-D-glucopyranosyl)-3-phospho-glycerate + H2O = (2R)-2-O-(alpha-D-glucopyranosyl)-glycerate + phosphate. The catalysed reaction is 2-O-(alpha-D-mannosyl)-3-phosphoglycerate + H2O = (2R)-2-O-(alpha-D-mannosyl)-glycerate + phosphate. Functionally, involved in the biosynthesis of glucosylglycerate. Catalyzes the dephosphorylation of glucosyl-3-phosphoglycerate (GPG) and mannosyl-3-phosphoglycerate (MPG) to glucosylglycerate (GG) and mannosylglycerate (MG), respectively. This chain is Glucosyl-3-phosphoglycerate/mannosyl-3-phosphoglycerate phosphatase, found in Methanococcoides burtonii (strain DSM 6242 / NBRC 107633 / OCM 468 / ACE-M).